A 1076-amino-acid chain; its full sequence is Isoleucine--tRNA ligase (1076 aa).

The 'HIGH' region signature appears at 47-57; that stretch reads PYTTGQIHLGT. The 'KMSKS' region signature appears at 591 to 595; the sequence is KMSKS. Lys594 contacts ATP.

It belongs to the class-I aminoacyl-tRNA synthetase family. IleS type 2 subfamily. In terms of assembly, monomer. Requires Zn(2+) as cofactor.

Its subcellular location is the cytoplasm. The enzyme catalyses tRNA(Ile) + L-isoleucine + ATP = L-isoleucyl-tRNA(Ile) + AMP + diphosphate. In terms of biological role, catalyzes the attachment of isoleucine to tRNA(Ile). As IleRS can inadvertently accommodate and process structurally similar amino acids such as valine, to avoid such errors it has two additional distinct tRNA(Ile)-dependent editing activities. One activity is designated as 'pretransfer' editing and involves the hydrolysis of activated Val-AMP. The other activity is designated 'posttransfer' editing and involves deacylation of mischarged Val-tRNA(Ile). This chain is Isoleucine--tRNA ligase, found in Methanoregula boonei (strain DSM 21154 / JCM 14090 / 6A8).